The sequence spans 125 residues: MFPKKKFLRCFCISRGRSSNRITLESPERNIPTGLRTYTASFNYLENPTSRMLDFSTSLTPDGLPDFTQTFRLPKTPTPSRTTSPKKVIIVNPGNIKCLGVQSQTKTTYITMPLMQVVREKLSTL.

It belongs to the geminiviridae protein AC4/C4 family.

Its function is as follows. Pathogenicity determinant. May act as a suppressor of RNA-mediated gene silencing, also known as post-transcriptional gene silencing (PTGS), a mechanism of plant viral defense that limits the accumulation of viral RNAs. The sequence is that of Protein AC4 from Cucurbita moschata (Winter crookneck squash).